The sequence spans 520 residues: tRNA (guanine-N(7)-)-methyltransferase non-catalytic subunit TRM82 (520 aa).

The interval 51-102 (PLDSEISPDRASSAGTCAEPPEKRRKLTPPVDESGEAQTEQSAKAKARKSQT) is disordered. 3 WD repeats span residues 105–145 (QAWS…KLTQ), 244–291 (GHVS…HIIH), and 296–338 (GHTS…QTIP).

This sequence belongs to the WD repeat TRM82 family. Forms a heterodimer with the catalytic subunit TRM8.

Its subcellular location is the nucleus. It participates in tRNA modification; N(7)-methylguanine-tRNA biosynthesis. In terms of biological role, required for the formation of N(7)-methylguanine at position 46 (m7G46) in tRNA. In the complex, it is required to stabilize and induce conformational changes of the catalytic subunit. This chain is tRNA (guanine-N(7)-)-methyltransferase non-catalytic subunit TRM82, found in Coccidioides immitis (strain RS) (Valley fever fungus).